The chain runs to 216 residues: Ribosomal RNA small subunit methyltransferase G (216 aa).

S-adenosyl-L-methionine is bound by residues glycine 81, phenylalanine 86, alanine 130 to glutamate 131, and arginine 144.

This sequence belongs to the methyltransferase superfamily. RNA methyltransferase RsmG family.

It localises to the cytoplasm. It carries out the reaction guanosine(527) in 16S rRNA + S-adenosyl-L-methionine = N(7)-methylguanosine(527) in 16S rRNA + S-adenosyl-L-homocysteine. In terms of biological role, specifically methylates the N7 position of guanine in position 527 of 16S rRNA. The protein is Ribosomal RNA small subunit methyltransferase G of Rhodospirillum centenum (strain ATCC 51521 / SW).